We begin with the raw amino-acid sequence, 576 residues long: Sulfite reductase [NADPH] hemoprotein beta-component (576 aa).

[4Fe-4S] cluster-binding residues include Cys-435, Cys-441, Cys-480, and Cys-484. Cys-484 contributes to the siroheme binding site.

The protein belongs to the nitrite and sulfite reductase 4Fe-4S domain family. As to quaternary structure, alpha(8)-beta(8). The alpha component is a flavoprotein, the beta component is a hemoprotein. Siroheme serves as cofactor. It depends on [4Fe-4S] cluster as a cofactor.

It carries out the reaction hydrogen sulfide + 3 NADP(+) + 3 H2O = sulfite + 3 NADPH + 4 H(+). It participates in sulfur metabolism; hydrogen sulfide biosynthesis; hydrogen sulfide from sulfite (NADPH route): step 1/1. Its function is as follows. Component of the sulfite reductase complex that catalyzes the 6-electron reduction of sulfite to sulfide. This is one of several activities required for the biosynthesis of L-cysteine from sulfate. The polypeptide is Sulfite reductase [NADPH] hemoprotein beta-component (Photorhabdus laumondii subsp. laumondii (strain DSM 15139 / CIP 105565 / TT01) (Photorhabdus luminescens subsp. laumondii)).